We begin with the raw amino-acid sequence, 313 residues long: Trimeric intracellular cation channel type 1B.2 (313 aa).

The Lumenal portion of the chain corresponds to Met1 to Tyr28. A helical membrane pass occupies residues Pro29 to Gly48. Over Pro49 to Lys57 the chain is Cytoplasmic. The discontinuously helical transmembrane segment at His58–Gly82 threads the bilayer. Residues Glu83 to Lys90 are Lumenal-facing. Residues Gln91–Ser108 form a helical membrane-spanning segment. Residues Pro109–Thr118 are Cytoplasmic-facing. The chain crosses the membrane as a helical span at residues Trp119 to Tyr149. Positions 130 and 134 each coordinate a 1,2-diacyl-sn-glycero-3-phospho-(1D-myo-inositol-4,5-bisphosphate). Topologically, residues Pro150–Glu151 are lumenal. A discontinuously helical membrane pass occupies residues Ser152 to Arg178. Gly168 lines the a 1,2-diacyl-sn-glycero-3-phospho-(1D-myo-inositol-4,5-bisphosphate) pocket. The Cytoplasmic segment spans residues Gly179–Ser192. A helical membrane pass occupies residues Phe193 to His210. The Lumenal portion of the chain corresponds to Ser211 to Ala216. A helical membrane pass occupies residues Pro217–Leu239. At Ser240–Asn313 the chain is on the cytoplasmic side.

It belongs to the TMEM38 family. Homotrimer; trimerization probably requires binding to phosphatidylinositol 4,5-bisphosphate (PIP2).

It is found in the endoplasmic reticulum membrane. Its function is as follows. Potassium channel that mediates transmembrane potassium transport. Might be required for maintenance of rapid intracellular calcium release. May act as a potassium counter-ion channel that functions in synchronization with calcium release from intracellular stores. Binds phosphatidylinositol 4,5-bisphosphate (PIP2). This chain is Trimeric intracellular cation channel type 1B.2, found in Caenorhabditis elegans.